A 234-amino-acid chain; its full sequence is 2-amino-5-formylamino-6-ribosylaminopyrimidin-4(3H)-one 5'-monophosphate deformylase (234 aa).

Glutamate 30, histidine 32, aspartate 41, and histidine 111 together coordinate Fe cation.

The protein belongs to the creatininase superfamily. FAPy deformylase family. In terms of assembly, homodimer. Fe(2+) serves as cofactor. Zn(2+) is required as a cofactor.

It carries out the reaction 2-amino-5-formylamino-6-(5-phospho-D-ribosylamino)pyrimidin-4(3H)-one + H2O = 2,5-diamino-6-(1-D-ribosylamino)pyrimidin-4(3H)-one 5'-phosphate + formate + H(+). Its pathway is cofactor biosynthesis; coenzyme F420 biosynthesis. It functions in the pathway cofactor biosynthesis; riboflavin biosynthesis. In terms of biological role, catalyzes the hydrolysis of the formamide of 2-amino-5-formylamino-6-ribosylamino-4(3H)-pyrimidinone 5'-monophosphate (FAPy) to form 2,5-diamino-6-ribosylamino-4(3H)-pyrimidinone 5'-phosphate (APy). The chain is 2-amino-5-formylamino-6-ribosylaminopyrimidin-4(3H)-one 5'-monophosphate deformylase from Methanothermobacter thermautotrophicus (strain ATCC 29096 / DSM 1053 / JCM 10044 / NBRC 100330 / Delta H) (Methanobacterium thermoautotrophicum).